Here is a 692-residue protein sequence, read N- to C-terminus: Elongation factor G (692 aa).

One can recognise a tr-type G domain in the interval 8-282; it reads AKTRNIGIMA…AVIAYLPSPL (275 aa). Residues 17 to 24, 81 to 85, and 135 to 138 each bind GTP; these read AHVDAGKT, DTPGH, and NKMD.

This sequence belongs to the TRAFAC class translation factor GTPase superfamily. Classic translation factor GTPase family. EF-G/EF-2 subfamily.

Its subcellular location is the cytoplasm. In terms of biological role, catalyzes the GTP-dependent ribosomal translocation step during translation elongation. During this step, the ribosome changes from the pre-translocational (PRE) to the post-translocational (POST) state as the newly formed A-site-bound peptidyl-tRNA and P-site-bound deacylated tRNA move to the P and E sites, respectively. Catalyzes the coordinated movement of the two tRNA molecules, the mRNA and conformational changes in the ribosome. The protein is Elongation factor G of Streptococcus pyogenes serotype M49 (strain NZ131).